Consider the following 404-residue polypeptide: Serine/threonine transporter SstT (404 aa).

Helical transmembrane passes span isoleucine 17–phenylalanine 37, isoleucine 39–leucine 59, methionine 75–leucine 95, alanine 138–leucine 158, isoleucine 179–isoleucine 199, phenylalanine 212–isoleucine 232, isoleucine 287–leucine 307, and phenylalanine 313–alanine 333.

The protein belongs to the dicarboxylate/amino acid:cation symporter (DAACS) (TC 2.A.23) family.

The protein resides in the cell membrane. The enzyme catalyses L-serine(in) + Na(+)(in) = L-serine(out) + Na(+)(out). It carries out the reaction L-threonine(in) + Na(+)(in) = L-threonine(out) + Na(+)(out). Its function is as follows. Involved in the import of serine and threonine into the cell, with the concomitant import of sodium (symport system). This is Serine/threonine transporter SstT from Streptococcus pyogenes serotype M2 (strain MGAS10270).